The chain runs to 152 residues: Deoxyuridine 5'-triphosphate nucleotidohydrolase (152 aa).

Substrate-binding positions include 71-73 (RSG), N84, 88-90 (LID), and M98.

It belongs to the dUTPase family. Mg(2+) serves as cofactor.

The catalysed reaction is dUTP + H2O = dUMP + diphosphate + H(+). It participates in pyrimidine metabolism; dUMP biosynthesis; dUMP from dCTP (dUTP route): step 2/2. This enzyme is involved in nucleotide metabolism: it produces dUMP, the immediate precursor of thymidine nucleotides and it decreases the intracellular concentration of dUTP so that uracil cannot be incorporated into DNA. The chain is Deoxyuridine 5'-triphosphate nucleotidohydrolase from Shewanella pealeana (strain ATCC 700345 / ANG-SQ1).